We begin with the raw amino-acid sequence, 373 residues long: 3 beta-hydroxysteroid dehydrogenase/Delta 5--&gt;4-isomerase type 2 (373 aa).

Tyr155 serves as the catalytic Proton acceptor. Residue Lys159 participates in NAD(+) binding. Residues 288–308 (VPLLYWLAFLLETVSFLLSPI) form a helical membrane-spanning segment.

Belongs to the 3-beta-HSD family. Liver and kidney.

It is found in the endoplasmic reticulum membrane. The protein localises to the mitochondrion membrane. The enzyme catalyses a 3beta-hydroxy-Delta(5)-steroid + NAD(+) = a 3-oxo-Delta(5)-steroid + NADH + H(+). It carries out the reaction a 3-oxo-Delta(5)-steroid = a 3-oxo-Delta(4)-steroid. It catalyses the reaction pregnenolone + NAD(+) = pregn-5-ene-3,20-dione + NADH + H(+). The catalysed reaction is pregn-5-ene-3,20-dione = progesterone. The enzyme catalyses 3beta-hydroxyandrost-5-en-17-one + NAD(+) = androst-5-ene-3,17-dione + NADH + H(+). It carries out the reaction androst-5-ene-3,17-dione = androst-4-ene-3,17-dione. It participates in lipid metabolism; steroid biosynthesis. Its function is as follows. 3-beta-HSD is a bifunctional enzyme, that catalyzes the oxidative conversion of Delta(5)-ene-3-beta-hydroxy steroid, and the oxidative conversion of ketosteroids. The 3-beta-HSD enzymatic system plays a crucial role in the biosynthesis of all classes of hormonal steroids. The protein is 3 beta-hydroxysteroid dehydrogenase/Delta 5--&gt;4-isomerase type 2 of Mus musculus (Mouse).